Reading from the N-terminus, the 139-residue chain is NADPH-dependent 7-cyano-7-deazaguanine reductase (139 aa).

The active-site Thioimide intermediate is Cys34. The active-site Proton donor is Asp41. Substrate contacts are provided by residues 56–58 (IEL) and 75–76 (HE).

This sequence belongs to the GTP cyclohydrolase I family. QueF type 1 subfamily.

Its subcellular location is the cytoplasm. It carries out the reaction 7-aminomethyl-7-carbaguanine + 2 NADP(+) = 7-cyano-7-deazaguanine + 2 NADPH + 3 H(+). Its pathway is tRNA modification; tRNA-queuosine biosynthesis. Functionally, catalyzes the NADPH-dependent reduction of 7-cyano-7-deazaguanine (preQ0) to 7-aminomethyl-7-deazaguanine (preQ1). This chain is NADPH-dependent 7-cyano-7-deazaguanine reductase, found in Nitrosomonas europaea (strain ATCC 19718 / CIP 103999 / KCTC 2705 / NBRC 14298).